The following is a 307-amino-acid chain: Taste receptor type 2 member 41 (307 aa).

Topologically, residues M1–A7 are extracellular. Residues F8 to V28 traverse the membrane as a helical segment. Residues L29 to R40 lie on the Cytoplasmic side of the membrane. A helical membrane pass occupies residues L41–V61. At G62 to H88 the chain is on the extracellular side. Residues W89–V109 traverse the membrane as a helical segment. Residues K110–W129 are Cytoplasmic-facing. A helical membrane pass occupies residues V130–W150. The Extracellular segment spans residues V151–S183. The N-linked (GlcNAc...) asparagine glycan is linked to N167. The helical transmembrane segment at L184–I204 threads the bilayer. Topologically, residues N205–K234 are cytoplasmic. A helical membrane pass occupies residues S235–T255. Residues K256–F264 are Extracellular-facing. Residues Y265–F285 traverse the membrane as a helical segment. The Cytoplasmic segment spans residues S286–A307.

Belongs to the G-protein coupled receptor T2R family.

The protein localises to the membrane. In terms of biological role, receptor that may play a role in the perception of bitterness and is gustducin-linked. May play a role in sensing the chemical composition of the gastrointestinal content. The activity of this receptor may stimulate alpha gustducin, mediate PLC-beta-2 activation and lead to the gating of TRPM5. This is Taste receptor type 2 member 41 (TAS2R41) from Gorilla gorilla gorilla (Western lowland gorilla).